Reading from the N-terminus, the 510-residue chain is GMP synthase [glutamine-hydrolyzing] (510 aa).

The 191-residue stretch at 5 to 195 folds into the Glutamine amidotransferase type-1 domain; the sequence is PILVVNFGSQ…IYGVCKAEKN (191 aa). C82 acts as the Nucleophile in catalysis. Active-site residues include H169 and E171. The GMPS ATP-PPase domain maps to 196–385; it reads WEMGDFIHEK…LGVPEEILRR (190 aa). 223–229 serves as a coordination point for ATP; sequence SGGVDST.

In terms of assembly, homodimer.

The enzyme catalyses XMP + L-glutamine + ATP + H2O = GMP + L-glutamate + AMP + diphosphate + 2 H(+). Its pathway is purine metabolism; GMP biosynthesis; GMP from XMP (L-Gln route): step 1/1. Its function is as follows. Catalyzes the synthesis of GMP from XMP. The polypeptide is GMP synthase [glutamine-hydrolyzing] (guaA) (Aquifex aeolicus (strain VF5)).